The primary structure comprises 339 residues: GTPase Obg (339 aa).

Residues 1–158 (MKFLDQVDLR…RDLTFELKLM (158 aa)) enclose the Obg domain. Disordered regions lie at residues 66 to 86 (FAED…GEDK) and 125 to 148 (GNAF…PGEE). The span at 72–86 (PGGRREQTGASGEDK) shows a compositional bias: basic and acidic residues. Residues 129–138 (FKSSTNQAPR) show a composition bias toward polar residues. An OBG-type G domain is found at 159-329 (ADVGLVGFPN…LKYTLFDTVH (171 aa)). Residues 165 to 172 (GFPNAGKS), 190 to 194 (FTTLT), 212 to 215 (DIPG), 279 to 282 (SKID), and 310 to 312 (SAV) contribute to the GTP site. The Mg(2+) site is built by serine 172 and threonine 192.

The protein belongs to the TRAFAC class OBG-HflX-like GTPase superfamily. OBG GTPase family. As to quaternary structure, monomer. Mg(2+) is required as a cofactor.

It is found in the cytoplasm. An essential GTPase which binds GTP, GDP and possibly (p)ppGpp with moderate affinity, with high nucleotide exchange rates and a fairly low GTP hydrolysis rate. Plays a role in control of the cell cycle, stress response, ribosome biogenesis and in those bacteria that undergo differentiation, in morphogenesis control. This is GTPase Obg from Salinibacter ruber (strain DSM 13855 / M31).